The sequence spans 340 residues: S-adenosylmethionine:tRNA ribosyltransferase-isomerase (340 aa).

Belongs to the QueA family. In terms of assembly, monomer.

The protein resides in the cytoplasm. The catalysed reaction is 7-aminomethyl-7-carbaguanosine(34) in tRNA + S-adenosyl-L-methionine = epoxyqueuosine(34) in tRNA + adenine + L-methionine + 2 H(+). It participates in tRNA modification; tRNA-queuosine biosynthesis. In terms of biological role, transfers and isomerizes the ribose moiety from AdoMet to the 7-aminomethyl group of 7-deazaguanine (preQ1-tRNA) to give epoxyqueuosine (oQ-tRNA). This Chlorobaculum parvum (strain DSM 263 / NCIMB 8327) (Chlorobium vibrioforme subsp. thiosulfatophilum) protein is S-adenosylmethionine:tRNA ribosyltransferase-isomerase.